Reading from the N-terminus, the 401-residue chain is Ureide permease 4 (401 aa).

At M1–A10 the chain is on the extracellular side. Residues I11–L31 traverse the membrane as a helical segment. At E32 to H40 the chain is on the cytoplasmic side. The helical transmembrane segment at T41 to G61 threads the bilayer. Topologically, residues E62–N81 are extracellular. A helical membrane pass occupies residues W82–T102. Residues Q103 to Y104 lie on the Cytoplasmic side of the membrane. A helical membrane pass occupies residues A105 to I125. Topologically, residues G126 to E141 are extracellular. A helical membrane pass occupies residues I142–A162. Topologically, residues S163–S231 are cytoplasmic. A224–S231 lines the ATP pocket. The helical transmembrane segment at I232 to A252 threads the bilayer. The Extracellular portion of the chain corresponds to F253 to T275. Residues A276 to L296 traverse the membrane as a helical segment. The Cytoplasmic portion of the chain corresponds to Y297 to R318. Residues G319–G339 traverse the membrane as a helical segment. Topologically, residues Q340–Y344 are extracellular. Residues A345–F365 traverse the membrane as a helical segment. At G366–R374 the chain is on the cytoplasmic side. Residues T375 to A395 form a helical membrane-spanning segment. The Extracellular portion of the chain corresponds to S396–K401.

Belongs to the plant ureide permease (TC 2.A.7.19) family. As to expression, expressed in developing seedlings, flower filaments and stigma, and the top and bottom parts of carpels in siliques.

Its subcellular location is the membrane. Its function is as follows. Proton-coupled transporter that transports a wide spectrum of oxo derivatives of heterocyclic nitrogen compounds. The sequence is that of Ureide permease 4 from Arabidopsis thaliana (Mouse-ear cress).